The following is a 122-amino-acid chain: S-adenosylmethionine decarboxylase proenzyme (122 aa).

Serine 63 functions as the Schiff-base intermediate with substrate; via pyruvic acid in the catalytic mechanism. The residue at position 63 (serine 63) is a Pyruvic acid (Ser); by autocatalysis. Histidine 68 serves as the catalytic Proton acceptor; for processing activity. The active-site Proton donor; for catalytic activity is cysteine 83.

Belongs to the prokaryotic AdoMetDC family. Type 1 subfamily. Heterotetramer of two alpha and two beta chains arranged as a dimer of alpha/beta heterodimers. Requires pyruvate as cofactor. Post-translationally, is synthesized initially as an inactive proenzyme. Formation of the active enzyme involves a self-maturation process in which the active site pyruvoyl group is generated from an internal serine residue via an autocatalytic post-translational modification. Two non-identical subunits are generated from the proenzyme in this reaction, and the pyruvate is formed at the N-terminus of the alpha chain, which is derived from the carboxyl end of the proenzyme. The post-translation cleavage follows an unusual pathway, termed non-hydrolytic serinolysis, in which the side chain hydroxyl group of the serine supplies its oxygen atom to form the C-terminus of the beta chain, while the remainder of the serine residue undergoes an oxidative deamination to produce ammonia and the pyruvoyl group blocking the N-terminus of the alpha chain.

It carries out the reaction S-adenosyl-L-methionine + H(+) = S-adenosyl 3-(methylsulfanyl)propylamine + CO2. It functions in the pathway amine and polyamine biosynthesis; S-adenosylmethioninamine biosynthesis; S-adenosylmethioninamine from S-adenosyl-L-methionine: step 1/1. In terms of biological role, catalyzes the decarboxylation of S-adenosylmethionine to S-adenosylmethioninamine (dcAdoMet), the propylamine donor required for the synthesis of the polyamines spermine and spermidine from the diamine putrescine. The polypeptide is S-adenosylmethionine decarboxylase proenzyme (Methanococcus vannielii (strain ATCC 35089 / DSM 1224 / JCM 13029 / OCM 148 / SB)).